Reading from the N-terminus, the 342-residue chain is Endolytic peptidoglycan transglycosylase RlpA (342 aa).

Positions 1 to 26 (MSKRVRSSLILPAVCGLGLAAVLLSS) are cleaved as a signal peptide. Cys-27 carries the N-palmitoyl cysteine lipid modification. Cys-27 carries S-diacylglycerol cysteine lipidation. One can recognise an SPOR domain in the interval 261-342 (SLPADGLYLQ…LGQPTLVRPD (82 aa)).

Belongs to the RlpA family.

Its subcellular location is the cell membrane. In terms of biological role, lytic transglycosylase with a strong preference for naked glycan strands that lack stem peptides. This chain is Endolytic peptidoglycan transglycosylase RlpA, found in Pseudomonas aeruginosa (strain ATCC 15692 / DSM 22644 / CIP 104116 / JCM 14847 / LMG 12228 / 1C / PRS 101 / PAO1).